We begin with the raw amino-acid sequence, 413 residues long: Na(+)-translocating NADH-quinone reductase subunit B (413 aa).

3 helical membrane passes run 55 to 75 (IMIM…YNAG), 128 to 148 (FLPI…LFCM), and 163 to 183 (ILFA…LGIT). T235 carries the FMN phosphoryl threonine modification. 5 helical membrane-spanning segments follow: residues 267-287 (IPGS…AMIV), 296-316 (IIAG…VIGS), 324-344 (MPWH…FMAT), 357-377 (WWYG…NPAY), and 380-400 (GMML…HVVI).

Belongs to the NqrB/RnfD family. In terms of assembly, composed of six subunits; NqrA, NqrB, NqrC, NqrD, NqrE and NqrF. Requires FMN as cofactor.

It localises to the cell inner membrane. It catalyses the reaction a ubiquinone + n Na(+)(in) + NADH + H(+) = a ubiquinol + n Na(+)(out) + NAD(+). NQR complex catalyzes the reduction of ubiquinone-1 to ubiquinol by two successive reactions, coupled with the transport of Na(+) ions from the cytoplasm to the periplasm. NqrA to NqrE are probably involved in the second step, the conversion of ubisemiquinone to ubiquinol. This Vibrio campbellii (strain ATCC BAA-1116) protein is Na(+)-translocating NADH-quinone reductase subunit B.